The chain runs to 286 residues: 4-hydroxybenzoate octaprenyltransferase (286 aa).

7 helical membrane passes run 22–42 (IGTL…EKAM), 45–65 (LSVL…GCVI), 98–118 (LFIV…LYTI), 143–163 (FFLG…TIEA), 213–233 (IIAL…YLSQ), 238–255 (YFIV…QCRL), and 266–286 (NAFL…LFGI).

It belongs to the UbiA prenyltransferase family. The cofactor is Mg(2+).

It is found in the cell inner membrane. The enzyme catalyses all-trans-octaprenyl diphosphate + 4-hydroxybenzoate = 4-hydroxy-3-(all-trans-octaprenyl)benzoate + diphosphate. The protein operates within cofactor biosynthesis; ubiquinone biosynthesis. Catalyzes the prenylation of para-hydroxybenzoate (PHB) with an all-trans polyprenyl group. Mediates the second step in the final reaction sequence of ubiquinone-8 (UQ-8) biosynthesis, which is the condensation of the polyisoprenoid side chain with PHB, generating the first membrane-bound Q intermediate 3-octaprenyl-4-hydroxybenzoate. The chain is 4-hydroxybenzoate octaprenyltransferase from Histophilus somni (strain 129Pt) (Haemophilus somnus).